The chain runs to 287 residues: Formamidopyrimidine-DNA glycosylase (287 aa).

The Schiff-base intermediate with DNA role is filled by proline 2. The active-site Proton donor is glutamate 3. Catalysis depends on lysine 58, which acts as the Proton donor; for beta-elimination activity. DNA is bound by residues histidine 104, arginine 123, and arginine 166. Residues 251-287 (RTYDREGQPCRNDGCRGVIGREVQAGRSTFYCPVCQR) form an FPG-type zinc finger. The Proton donor; for delta-elimination activity role is filled by arginine 277.

It belongs to the FPG family. In terms of assembly, monomer. It depends on Zn(2+) as a cofactor.

The enzyme catalyses Hydrolysis of DNA containing ring-opened 7-methylguanine residues, releasing 2,6-diamino-4-hydroxy-5-(N-methyl)formamidopyrimidine.. It catalyses the reaction 2'-deoxyribonucleotide-(2'-deoxyribose 5'-phosphate)-2'-deoxyribonucleotide-DNA = a 3'-end 2'-deoxyribonucleotide-(2,3-dehydro-2,3-deoxyribose 5'-phosphate)-DNA + a 5'-end 5'-phospho-2'-deoxyribonucleoside-DNA + H(+). Functionally, involved in base excision repair of DNA damaged by oxidation or by mutagenic agents. Acts as a DNA glycosylase that recognizes and removes damaged bases. Has a preference for oxidized purines, such as 7,8-dihydro-8-oxoguanine (8-oxoG). Has AP (apurinic/apyrimidinic) lyase activity and introduces nicks in the DNA strand. Cleaves the DNA backbone by beta-delta elimination to generate a single-strand break at the site of the removed base with both 3'- and 5'-phosphates. In Phenylobacterium zucineum (strain HLK1), this protein is Formamidopyrimidine-DNA glycosylase.